The chain runs to 701 residues: MNNGFFNSDFDSIFRRMMKDMQGSNQVGNKKYYINGKEVSPEELAQLTQQGGNHSAEQSAQAFQQAAQRQQGQQGGNGNYLEQIGRNLTQEARDGLLDPVIGRDKEIQETAEVLSRRTKNNPILVGEAGVGKTAIVEGLAQAIVEGNVPAAIKDKEIISVDISSLEAGTQYRGAFEENIQKLIEGVKSSQNAVLFFDEIHQIIGSGATGSDSGSKGLSDILKPALSRGEISIIGATTQDEYRNNILKDSALTRRFNEVLVNEPSAKDTVEILKGIREKFEEHHQVKLPDDVLKACVDLSIQYIPQRLLPDKAIDVLDITAAHLSAQSPAVDKVETEKRISELENDKRKAVSAEEYKKADDIQNEIKSLQDKLENSNGEHTAVATVHDISDTIQRLTGIPVSQMDDNDIERLKNISNRLRSKIIGQDQAVEMVSRAIRRNRAGFDDGNRPIGSFLFVGPTGVGKTELAKQLAIDLFGNKDALIRLDMSEYSDTTAVSKMIGTTAGYVGYDDNSNTLTEKVRRNPYSVILFDEIEKANPQILTLLLQVMDDGNLTDGQGNVINFKNTIIICTSNAGFGNGNDAEEKDIMHEMKKFFRPEFLNRFNGIVEFLHLDKDALQDIVNLLLDDVQVTLDKKGITMDVSQDAKDWLIEEGYDEELGARPLRRIVEQQVRDKITDYYLDHTDVKHVDIDVEDNELVVKGK.

Positions 47-57 (LTQQGGNHSAE) are enriched in polar residues. Residues 47 to 79 (LTQQGGNHSAEQSAQAFQQAAQRQQGQQGGNGN) are disordered. Positions 58–72 (QSAQAFQQAAQRQQG) are enriched in low complexity. Positions 81–332 (LEQIGRNLTQ…LSAQSPAVDK (252 aa)) are i. Residue 126 to 133 (GEAGVGKT) coordinates ATP. The 36-residue stretch at 336–371 (EKRISELENDKRKAVSAEEYKKADDIQNEIKSLQDK) folds into the UVR domain. Residues 383–575 (ATVHDISDTI…IIICTSNAGF (193 aa)) are II. 457-464 (GPTGVGKT) contacts ATP.

The protein belongs to the ClpA/ClpB family. ClpL subfamily.

In terms of biological role, required for the development of induced thermotolerance. This Staphylococcus aureus (strain USA300) protein is ATP-dependent Clp protease ATP-binding subunit ClpL (clpL).